We begin with the raw amino-acid sequence, 338 residues long: MEMTHYEKTPLIRQVFNNGKTNSWFYVKHEILQPGGSFKSRGIGHLIRKSNQQPLSEGSGKLAVFSSSGGNAGLAAATACRSMALNCSVVVPKTTKPRMVKKIQSAGAKVIIHGDHWGEADEYLRHKLMAQESQHGSKTLYVHPFDNETIWEGHSTIVDEIIEQLKENDISLPRVKALVCSVGGGGLFSGIIKGLDRNHLAEKIPVVAVETAGCDVLNKSLKKGSPVTLEKLTSVATSLASPYIASFAFESFNKYGCKSVVLSDQDVLATCLRYADDYNFIVEPACGASLHLCYHPEILEDILEQKIYEDDIVIIIACGGSCMTYEDLVKASSTLNVS.

Lys39 bears the N6-(pyridoxal phosphate)lysine mark.

It belongs to the serine/threonine dehydratase family. It depends on pyridoxal 5'-phosphate as a cofactor.

The protein localises to the cytoplasm. The catalysed reaction is L-serine = pyruvate + NH4(+). It functions in the pathway carbohydrate biosynthesis; gluconeogenesis. This Saccharomyces cerevisiae (Baker's yeast) protein is L-serine dehydratase (SDL1).